A 708-amino-acid polypeptide reads, in one-letter code: DNA ligase 2 (708 aa).

NAD(+) is bound by residues aspartate 71–aspartate 75, serine 121–leucine 122, and glutamate 153. The active-site N6-AMP-lysine intermediate is the lysine 155. NAD(+)-binding residues include arginine 176, glutamate 213, lysine 330, and lysine 354. Zn(2+) contacts are provided by cysteine 448, cysteine 451, cysteine 466, and cysteine 471. The 82-residue stretch at alanine 627 to glutamate 708 folds into the BRCT domain.

The protein belongs to the NAD-dependent DNA ligase family. LigA subfamily. Mg(2+) serves as cofactor. Requires Mn(2+) as cofactor.

It catalyses the reaction NAD(+) + (deoxyribonucleotide)n-3'-hydroxyl + 5'-phospho-(deoxyribonucleotide)m = (deoxyribonucleotide)n+m + AMP + beta-nicotinamide D-nucleotide.. DNA ligase that catalyzes the formation of phosphodiester linkages between 5'-phosphoryl and 3'-hydroxyl groups in double-stranded DNA using NAD as a coenzyme and as the energy source for the reaction. It is essential for DNA replication and repair of damaged DNA. The polypeptide is DNA ligase 2 (Opitutus terrae (strain DSM 11246 / JCM 15787 / PB90-1)).